The chain runs to 209 residues: Ubiquitin-conjugating enzyme E2 S (209 aa).

Residues 14-160 (QTIRQVMREL…ARMMTEIHAQ (147 aa)) enclose the UBC core domain. The active-site Glycyl thioester intermediate is cysteine 98. A disordered region spans residues 164-209 (CAAGAAGDSKDDDGPSTKKHAGLDKKLQDKKKEKLLKEKKRMLKRL). Positions 171–199 (DSKDDDGPSTKKHAGLDKKLQDKKKEKLL) are enriched in basic and acidic residues. Over residues 200-209 (KEKKRMLKRL) the composition is skewed to basic residues.

The protein belongs to the ubiquitin-conjugating enzyme family.

It carries out the reaction S-ubiquitinyl-[E1 ubiquitin-activating enzyme]-L-cysteine + [E2 ubiquitin-conjugating enzyme]-L-cysteine = [E1 ubiquitin-activating enzyme]-L-cysteine + S-ubiquitinyl-[E2 ubiquitin-conjugating enzyme]-L-cysteine.. It functions in the pathway protein modification; protein ubiquitination. In terms of biological role, catalyzes the covalent attachment of ubiquitin to other proteins. Acts as an essential factor of the anaphase promoting complex/cyclosome (APC/C), a cell cycle-regulated ubiquitin ligase that controls progression through mitosis. Acts by specifically elongating polyubiquitin chains initiated by the E2 enzyme vih/UbcH10 on APC/C substrates, enhancing the degradation of APC/C substrates by the proteasome and promoting mitotic exit. This is Ubiquitin-conjugating enzyme E2 S from Drosophila ananassae (Fruit fly).